A 727-amino-acid polypeptide reads, in one-letter code: MEGERKNNNKRWYFTREQLENSPSRRFGLDPDKELSYRQQAANLLQDMGQRLNVSQLTINTAIVYMHRFYMIQSFTQFHRNSVAPAALFLAAKVEEQPKKLEHVIKVAHACLHPQESLPDTRSEAYLQQVQDLVILESIILQTLGFELTIDHPHTHVVKCTQLVRASKDLAQTSYFMATNSLHLTTFSLQYTPPVVACVCIHLACKWSNWEIPVSTDGKHWWEYVDATVTLELLDELTHEFLQILEKTPNRLKRIRNWRACQAAKKTKADDRGTDENTSEQTILNMISQSSSDTTIAGLMSMSTSSTTSTVPSLPTTEESSSNLSGVEMLQGERWLSSQPPFKLEPAQGHRTSENLALIGVDHSLQQDGSNAFISQKQNSSKSVPSAKVSLKEYRAKHAEELAAQKRQLENMEANVKSQYAYAAQNLLSHHDSHSSVILKMPIEGSENPERPFLEKPDKTALKMRIPVASGDKAASSKPEEIKMRIKVHAAPDKHNSIDDSVTKSREHKEKHKTHPSNHHHHHNHHSHKHSHSQLPAGTGNKRPGDPKHSSQTSTLAHKTYSLSSSFSSSSSSRKRGPPEETGGALFDHPAKIAKSTKSSSINFFPPLPTMAQLPGHSSDTSGLPFSQPSCKTRVPHMKLDKGPTGANGHNTTQTIDYQDTVNMLHSLLHAQGVQPTQPPALEFVHSYGEYLNPRAGGMPSRSGNTDKPRLPPLPSEPPPPLPPLPK.

At Ser-117 the chain carries Phosphoserine. The short motif at 253–270 (KRIRNWRACQAAKKTKAD) is the Nuclear localization signal, and interaction with Tat-TAR RNA element. The segment covering 302–322 (MSTSSTTSTVPSLPTTEESSS) has biased composition (low complexity). Residues 302–326 (MSTSSTTSTVPSLPTTEESSSNLSG) are disordered. Residue Lys-343 forms a Glycyl lysine isopeptide (Lys-Gly) (interchain with G-Cter in SUMO2) linkage. The stretch at 386–427 (SAKVSLKEYRAKHAEELAAQKRQLENMEANVKSQYAYAAQNL) forms a coiled coil. Position 390 is a phosphoserine (Ser-390). Residue Lys-392 is modified to N6-acetyllysine. Residue Lys-417 forms a Glycyl lysine isopeptide (Lys-Gly) (interchain with G-Cter in SUMO2) linkage. ADP-ribosylserine occurs at positions 418, 476, and 477. A histidine-rich domain (HRD) region spans residues 482–552 (IKMRIKVHAA…RPGDPKHSSQ (71 aa)). Lys-483 participates in a covalent cross-link: Glycyl lysine isopeptide (Lys-Gly) (interchain with G-Cter in SUMO2). Over residues 486–508 (IKVHAAPDKHNSIDDSVTKSREH) the composition is skewed to basic and acidic residues. 2 disordered regions span residues 486–591 (IKVH…DHPA) and 692–727 (LNPR…PLPK). Lys-487 bears the N6-(ADP-ribosyl)lysine mark. An ADP-ribosylhistidine modification is found at His-489. Ser-497 and Ser-501 each carry phosphoserine. Positions 509–532 (KEKHKTHPSNHHHHHNHHSHKHSH) are enriched in basic residues. His-532 is modified (ADP-ribosylhistidine). An ADP-ribosylserine mark is found at Ser-533, Ser-551, and Ser-554. His-558 bears the ADP-ribosylhistidine mark. Residues 562–572 (SLSSSFSSSSS) show a composition bias toward low complexity. Residue Ser-565 is modified to ADP-ribosylserine. Ser-566 is subject to Phosphoserine. Positions 711–727 (LPPLPSEPPPPLPPLPK) are enriched in pro residues.

This sequence belongs to the cyclin family. Cyclin C subfamily. As to quaternary structure, cyclin-T1 is the predominant cyclin that associates with CDK9 to form a heterodimer called P-TEFb. P-TEFb forms a complex with AFF4/AF5Q31. Component of a complex which is at least composed of HTATSF1/Tat-SF1, P-TEFb complex, RNA pol II, SUPT5H, and NCL/nucleolin. Component of the 7SK snRNP complex at least composed of P-TEFb (composed of CDK9 and CCNT1/cyclin-T1), HEXIM1, HEXIM2, BCDIN3, SART3 proteins and 7SK and U6 snRNAs. Interacts (via central region) with ZMYND8 (via N-terminus); the interaction is direct and the association appears to occur between homodimeric ZMYND8 and the activated form of the P-TEFb complex. Interacts with BRD4, targets chromatin binding. Interacts with JMJD6. Interacts with MDFIC. Interacts with HSF1. Interacts with HTATSF1. Interacts with TBX21. ADP-ribosylation on serine residues by PARP1 in response to DNA damage disrupts the phase separation activity of CCNT1, thereby preventing activation of CDK9.

The protein localises to the nucleus. Regulatory subunit of the cyclin-dependent kinase pair (CDK9/cyclin-T1) complex, also called positive transcription elongation factor B (P-TEFb), which facilitates the transition from abortive to productive elongation by phosphorylating the CTD (C-terminal domain) of the large subunit of RNA polymerase II (RNA Pol II). Required to activate the protein kinase activity of CDK9: acts by mediating formation of liquid-liquid phase separation (LLPS) that enhances binding of P-TEFb to the CTD of RNA Pol II. This chain is Cyclin-T1 (CCNT1), found in Equus caballus (Horse).